We begin with the raw amino-acid sequence, 470 residues long: Cannabinoid receptor type 1B (470 aa).

Residues 1-113 (MKLALHRIAG…CFMILTPAQQ (113 aa)) lie on the Extracellular side of the membrane. N-linked (GlcNAc...) asparagine glycosylation is found at asparagine 78 and asparagine 86. Residues 114-139 (LVIVILAITLGTFTVLENFVVLCVIL) traverse the membrane as a helical segment. At 140–151 (HSHTLRSRPSYH) the chain is on the cytoplasmic side. The chain crosses the membrane as a helical span at residues 152-172 (FIGSLAVADLIGSIIFVYSFL). Over 173 to 184 (DFHVLHRKDSPS) the chain is Extracellular. The helical transmembrane segment at 185–209 (IFLFKLAGVIASFTASVGSLFLTAI) threads the bilayer. Over 210 to 229 (DRYVSIHRPMAYKRIITKTK) the chain is Cytoplasmic. Residues 230 to 252 (AVIAFSVMWAISIEFSLLPLLGW) traverse the membrane as a helical segment. At 253–270 (NCKRLHSVCSDIFPLIDE) the chain is on the extracellular side. The helical transmembrane segment at 271 to 296 (KYLMFWIGMTTVLLLFIIYAYMFILW) threads the bilayer. The Cytoplasmic portion of the chain corresponds to 297 to 341 (KSHHHAVRMLSRSSQRSIIVYTSEGTKVQTVRPEQARMDLRLAKT). Residues 342–362 (LVLILVALIICWGPLLAIMVY) form a helical membrane-spanning segment. The Extracellular portion of the chain corresponds to 363-374 (DLFGRVNDFIKT). Residues 375–396 (VFAFCSMLCLLNSTINPVIYAM) traverse the membrane as a helical segment. Residues 397-470 (RSKDLRRAFV…VTASSPAEAV (74 aa)) lie on the Cytoplasmic side of the membrane. A lipid anchor (S-palmitoyl cysteine) is attached at cysteine 412. Residues 418–434 (SLDSSAESDWNSRSVRS) are compositionally biased toward polar residues. A disordered region spans residues 418-450 (SLDSSAESDWNSRSVRSTGGRAGKDRSVGGKPQ).

Belongs to the G-protein coupled receptor 1 family. Palmitoylation at Cys-412 is important for recruitment at both plasma membrane and lipid rafts and association with G protein alpha subunits.

The protein localises to the cell membrane. The protein resides in the mitochondrion outer membrane. It is found in the cell projection. Its subcellular location is the axon. It localises to the presynapse. In terms of biological role, G-protein coupled receptor for cannabinoids. Mediates many cannabinoid-induced effects in the central nervous system (CNS), as well as in peripheral tissues. Regulates cellular respiration and energy production in response to cannabinoids. Signaling typically involves reduction in cyclic AMP. This Takifugu rubripes (Japanese pufferfish) protein is Cannabinoid receptor type 1B (cnr1b).